The primary structure comprises 664 residues: E3 ubiquitin-protein ligase CHFR (664 aa).

The tract at residues 1–21 (MERPEEGKQSPPPQPWGRLLR) is disordered. One can recognise an FHA domain in the interval 38 to 89 (WTIGRRRGCDLSFPSNKLVSGDHCRIVVDEKSGQVTLEDTSTSGTVINKLKV). The tract at residues 142–267 (FHGTKDTSGA…KKMRGDGDLD (126 aa)) is disordered. The segment covering 186 to 198 (PTASASSTEPSPA) has biased composition (low complexity). Ser244 carries the phosphoserine modification. The segment covering 254-264 (EPVKKKMRGDG) has biased composition (basic and acidic residues). The RING-type zinc-finger motif lies at 304–343 (CIICQDLLHDCVSLQPCMHTFCAACYSGWMERSSLCPTCR). At Thr386 the chain carries Phosphothreonine. 2 disordered regions span residues 388-417 (DMLQPKVRRSFSDEEGSSEDLLELSDVDSE) and 439-461 (AQPPHCPAPEGEPGAPQALGDAP). Over residues 400-417 (DEEGSSEDLLELSDVDSE) the composition is skewed to acidic residues. The PBZ-type zinc finger occupies 633–655 (PDCYWGRNCRTQVKAHHAMKFNH).

The protein belongs to the CHFR family. In terms of assembly, interacts with HDAC1 and HDAC2. Interacts with PML (with sumoylated form of PML). Poly-ADP-ribosylated. In addition to binding non covalently poly(ADP-ribose) via its PBZ-type zinc finger, the protein is also covalently poly-ADP-ribosylated by PARP1. Post-translationally, autoubiquitinated; may regulate its cellular level. In terms of processing, phosphorylated by PKB. Phosphorylation may affect its E3 ligase activity. Ubiquitous.

The protein localises to the nucleus. Its subcellular location is the PML body. The enzyme catalyses S-ubiquitinyl-[E2 ubiquitin-conjugating enzyme]-L-cysteine + [acceptor protein]-L-lysine = [E2 ubiquitin-conjugating enzyme]-L-cysteine + N(6)-ubiquitinyl-[acceptor protein]-L-lysine.. The protein operates within protein modification; protein ubiquitination. Functionally, E3 ubiquitin-protein ligase that functions in the antephase checkpoint by actively delaying passage into mitosis in response to microtubule poisons. Acts in early prophase before chromosome condensation, when the centrosome move apart from each other along the periphery of the nucleus. Probably involved in signaling the presence of mitotic stress caused by microtubule poisons by mediating the 'Lys-48'-linked ubiquitination of target proteins, leading to their degradation by the proteasome. Promotes the ubiquitination and subsequent degradation of AURKA and PLK1. Probably acts as a tumor suppressor, possibly by mediating the polyubiquitination of HDAC1, leading to its degradation. May also promote the formation of 'Lys-63'-linked polyubiquitin chains and functions with the specific ubiquitin-conjugating UBC13-MMS2 (UBE2N-UBE2V2) heterodimer. Substrates that are polyubiquitinated at 'Lys-63' are usually not targeted for degradation, but are rather involved in signaling cellular stress. This Homo sapiens (Human) protein is E3 ubiquitin-protein ligase CHFR (CHFR).